A 539-amino-acid chain; its full sequence is Protein Wnt-4 (539 aa).

Residues 1–21 (MPSPTGVFVLMILTHLSFGLG) form the signal peptide. The interval 34 to 77 (QNGDLDSSNPAIHHQQHQQHQQHQQHQQHQSNHNLNNGNMNSTI) is disordered. Residues 51–74 (QQHQQHQQHQQHQSNHNLNNGNMN) show a composition bias toward low complexity. N-linked (GlcNAc...) asparagine glycosylation is found at N74 and N284. 5 disulfides stabilise this stretch: C274–C285, C322–C330, C332–C349, C397–C411, and C399–C406. Residue S403 is the site of O-palmitoleoyl serine; by PORCN attachment. The N-linked (GlcNAc...) asparagine glycan is linked to N419. The segment at 436-463 (APNQRSMRQVSSSRMKKPKQRRKKPQQS) is disordered. Residues 439-448 (QRSMRQVSSS) show a composition bias toward low complexity. The span at 449-460 (RMKKPKQRRKKP) shows a compositional bias: basic residues. Cystine bridges form between C478-C497, C486-C492, C496-C538, C512-C529, C514-C526, and C521-C522.

The protein belongs to the Wnt family. Post-translationally, palmitoleoylated by porcupine. The lipid group functions as a sorting signal, targeting the ligand to polarized vesicles that transport Wnt4 to unique sites at the cell surface. Depalmitoleoylated by notum, leading to inhibit Wnt signaling pathway.

Its subcellular location is the secreted. It is found in the extracellular space. It localises to the extracellular matrix. Functionally, binds as a ligand to a family of frizzled seven-transmembrane receptors and acts through a cascade of genes on the nucleus. Acts downstream of homeotic complex genes in the visceral mesoderm and is required for embryonic segmentation. Also required for cell movement and FAK regulation during ovarian morphogenesis. The protein is Protein Wnt-4 (Wnt4) of Drosophila melanogaster (Fruit fly).